Here is an 89-residue protein sequence, read N- to C-terminus: Small ribosomal subunit protein uS15 (89 aa).

Belongs to the universal ribosomal protein uS15 family. As to quaternary structure, part of the 30S ribosomal subunit. Forms a bridge to the 50S subunit in the 70S ribosome, contacting the 23S rRNA.

One of the primary rRNA binding proteins, it binds directly to 16S rRNA where it helps nucleate assembly of the platform of the 30S subunit by binding and bridging several RNA helices of the 16S rRNA. Functionally, forms an intersubunit bridge (bridge B4) with the 23S rRNA of the 50S subunit in the ribosome. This chain is Small ribosomal subunit protein uS15, found in Marinobacter nauticus (strain ATCC 700491 / DSM 11845 / VT8) (Marinobacter aquaeolei).